A 381-amino-acid polypeptide reads, in one-letter code: Erythronate-4-phosphate dehydrogenase (381 aa).

Residues serine 45 and threonine 66 each contribute to the substrate site. NAD(+)-binding positions include aspartate 146, threonine 174, 205 to 207, and aspartate 231; that span reads ASR. The active site involves arginine 207. Glutamate 236 is a catalytic residue. Histidine 253 serves as the catalytic Proton donor. Residue glycine 256 coordinates NAD(+). Tyrosine 257 is a binding site for substrate.

The protein belongs to the D-isomer specific 2-hydroxyacid dehydrogenase family. PdxB subfamily. Homodimer.

The protein resides in the cytoplasm. The catalysed reaction is 4-phospho-D-erythronate + NAD(+) = (R)-3-hydroxy-2-oxo-4-phosphooxybutanoate + NADH + H(+). Its pathway is cofactor biosynthesis; pyridoxine 5'-phosphate biosynthesis; pyridoxine 5'-phosphate from D-erythrose 4-phosphate: step 2/5. Catalyzes the oxidation of erythronate-4-phosphate to 3-hydroxy-2-oxo-4-phosphonooxybutanoate. The protein is Erythronate-4-phosphate dehydrogenase of Stutzerimonas stutzeri (strain A1501) (Pseudomonas stutzeri).